A 291-amino-acid polypeptide reads, in one-letter code: ATP synthase gamma chain (291 aa).

This sequence belongs to the ATPase gamma chain family. In terms of assembly, F-type ATPases have 2 components, CF(1) - the catalytic core - and CF(0) - the membrane proton channel. CF(1) has five subunits: alpha(3), beta(3), gamma(1), delta(1), epsilon(1). CF(0) has three main subunits: a, b and c.

The protein resides in the cell inner membrane. Produces ATP from ADP in the presence of a proton gradient across the membrane. The gamma chain is believed to be important in regulating ATPase activity and the flow of protons through the CF(0) complex. This is ATP synthase gamma chain from Caulobacter vibrioides (strain NA1000 / CB15N) (Caulobacter crescentus).